Reading from the N-terminus, the 549-residue chain is Chaperonin GroEL (549 aa).

Residues 29-32 (TAGP), K50, 86-90 (DGTTT), G418, and D499 contribute to the ATP site.

Belongs to the chaperonin (HSP60) family. As to quaternary structure, forms a cylinder of 14 subunits composed of two heptameric rings stacked back-to-back. Interacts with the co-chaperonin GroES.

Its subcellular location is the cytoplasm. The catalysed reaction is ATP + H2O + a folded polypeptide = ADP + phosphate + an unfolded polypeptide.. Functionally, together with its co-chaperonin GroES, plays an essential role in assisting protein folding. The GroEL-GroES system forms a nano-cage that allows encapsulation of the non-native substrate proteins and provides a physical environment optimized to promote and accelerate protein folding. This is Chaperonin GroEL from Wolbachia sp. subsp. Drosophila simulans (strain wRi).